The following is a 435-amino-acid chain: Gamma-glutamyl phosphate reductase (435 aa).

It belongs to the gamma-glutamyl phosphate reductase family.

The protein resides in the cytoplasm. The catalysed reaction is L-glutamate 5-semialdehyde + phosphate + NADP(+) = L-glutamyl 5-phosphate + NADPH + H(+). The protein operates within amino-acid biosynthesis; L-proline biosynthesis; L-glutamate 5-semialdehyde from L-glutamate: step 2/2. In terms of biological role, catalyzes the NADPH-dependent reduction of L-glutamate 5-phosphate into L-glutamate 5-semialdehyde and phosphate. The product spontaneously undergoes cyclization to form 1-pyrroline-5-carboxylate. This chain is Gamma-glutamyl phosphate reductase, found in Parasynechococcus marenigrum (strain WH8102).